We begin with the raw amino-acid sequence, 531 residues long: Large neutral amino acids transporter small subunit 2 (531 aa).

The segment at M1–G29 is disordered. Over M1–S43 the chain is Cytoplasmic. Positions Q7–S21 are enriched in polar residues. S18, S21, S27, and S28 each carry phosphoserine. Residues A44–V64 traverse the membrane as a helical segment. I52 contributes to the L-leucine binding site. Residues L65–G72 lie on the Extracellular side of the membrane. The helical transmembrane segment at L73–E94 threads the bilayer. Residues L95 to G115 are Cytoplasmic-facing. A helical transmembrane segment spans residues L116–P148. N133 is an L-tryptophan binding site. Over L149–P156 the chain is Extracellular. The chain crosses the membrane as a helical span at residues E157–S177. Residues S178 to R180 lie on the Cytoplasmic side of the membrane. Residues W181 to C209 form a helical membrane-spanning segment. The Extracellular portion of the chain corresponds to K210–D229. Residues I230 to N251 form a helical membrane-spanning segment. G245 serves as a coordination point for L-leucine. Over Y252 to L264 the chain is Cytoplasmic. Residues P265–Y286 form a helical membrane-spanning segment. Topologically, residues V287–G311 are extracellular. The chain crosses the membrane as a helical span at residues V312–S337. The Cytoplasmic segment spans residues R338–P363. The helical transmembrane segment at I364–S381 threads the bilayer. Topologically, residues D382–T385 are extracellular. The chain crosses the membrane as a helical span at residues L386–V407. N394 contacts L-tryptophan. Over L408–S422 the chain is Cytoplasmic. A run of 2 helical transmembrane segments spans residues L423 to P445 and V446 to G465. At V466 to P531 the chain is on the cytoplasmic side. The tract at residues N499 to P531 is disordered. At S527 the chain carries Phosphoserine.

This sequence belongs to the amino acid-polyamine-organocation (APC) superfamily. L-type amino acid transporter (LAT) (TC 2.A.3.8) family. As to quaternary structure, disulfide-linked heterodimer composed of the catalytic light chain subunit SLC7A8 and the heavy chain subunit SLC3A2. SLC3A2 acts as a chaperone for correct plasma membrane trafficking and stabilization of SLC7A8 and modulates the substrate affinity and specificity of SLC7A8. ICAM-1 associates with the heterodimer SLC3A2/SLC7A8; facilitates leucine uptake. As to expression, strongly expressed in kidney and small intestine. Moderately present in placenta, ovary and brain. Expressed in the inner ear.

It is found in the cell membrane. Its subcellular location is the basolateral cell membrane. It carries out the reaction L-histidine(in) + L-phenylalanine(out) = L-histidine(out) + L-phenylalanine(in). The enzyme catalyses L-tryptophan(in) + L-phenylalanine(out) = L-tryptophan(out) + L-phenylalanine(in). It catalyses the reaction L-isoleucine(in) + L-phenylalanine(out) = L-isoleucine(out) + L-phenylalanine(in). The catalysed reaction is L-valine(in) + L-phenylalanine(out) = L-valine(out) + L-phenylalanine(in). It carries out the reaction L-leucine(in) + L-phenylalanine(out) = L-leucine(out) + L-phenylalanine(in). The enzyme catalyses L-glutamine(in) + L-phenylalanine(out) = L-glutamine(out) + L-phenylalanine(in). It catalyses the reaction L-cysteine(in) + L-phenylalanine(out) = L-cysteine(out) + L-phenylalanine(in). The catalysed reaction is L-phenylalanine(out) + L-methionine(in) = L-phenylalanine(in) + L-methionine(out). It carries out the reaction L-leucine(out) + L-methionine(in) = L-leucine(in) + L-methionine(out). The enzyme catalyses L-cysteine(out) + L-methionine(in) = L-cysteine(in) + L-methionine(out). It catalyses the reaction S-methylmercury-L-cysteine(out) + L-methionine(in) = S-methylmercury-L-cysteine(in) + L-methionine(out). The catalysed reaction is S-methylmercury-L-cysteine(in) + L-leucine(out) = S-methylmercury-L-cysteine(out) + L-leucine(in). It carries out the reaction S-methylmercury-L-cysteine(in) + L-phenylalanine(out) = S-methylmercury-L-cysteine(out) + L-phenylalanine(in). The enzyme catalyses L-phenylalanine(out) + L-serine(in) = L-phenylalanine(in) + L-serine(out). It catalyses the reaction L-phenylalanine(out) + glycine(in) = L-phenylalanine(in) + glycine(out). The catalysed reaction is L-phenylalanine(out) + L-alanine(in) = L-phenylalanine(in) + L-alanine(out). It carries out the reaction L-tryptophan(in) = L-tryptophan(out). The enzyme catalyses 3,3',5-triiodo-L-thyronine(out) = 3,3',5-triiodo-L-thyronine(in). It catalyses the reaction 3,3'-diiodo-L-thyronine(out) = 3,3'-diiodo-L-thyronine(in). The catalysed reaction is L-dopa(out) + L-phenylalanine(in) = L-dopa(in) + L-phenylalanine(out). Its function is as follows. Associates with SLC3A2 to form a functional heterodimeric complex that translocates small and large neutral amino acids with broad specificity and a stoichiometry of 1:1. Functions as amino acid antiporter mediating the influx of extracellular essential amino acids mainly in exchange with the efflux of highly concentrated intracellular amino acids. Has relatively symmetrical selectivities but strongly asymmetrical substrate affinities at both the intracellular and extracellular sides of the transporter. This asymmetry allows SLC7A8 to regulate intracellular amino acid pools (mM concentrations) by exchange with external amino acids (uM concentration range), equilibrating the relative concentrations of different amino acids across the plasma membrane instead of mediating their net uptake. May play an essential role in the reabsorption of neutral amino acids from the epithelial cells to the bloodstream in the kidney. Involved in the uptake of methylmercury (MeHg) when administered as the L-cysteine or D,L-homocysteine complexes, and hence plays a role in metal ion homeostasis and toxicity. Involved in the cellular activity of small molecular weight nitrosothiols, via the stereoselective transport of L-nitrosocysteine (L-CNSO) across the transmembrane. Imports the thyroid hormone diiodothyronine (T2) and to a smaller extent triiodothyronine (T3) but not rT 3 or thyroxine (T4). Mediates the uptake of L-DOPA. May participate in auditory function. The polypeptide is Large neutral amino acids transporter small subunit 2 (Slc7a8) (Mus musculus (Mouse)).